Consider the following 102-residue polypeptide: Cytochrome b (102 aa).

3 consecutive transmembrane segments (helical) span residues 1-21 (FGSLLGVCLITQILTGLFLAM), 45-66 (WLIRNIHTNGASLFFICIYMHI), and 81-101 (WNIGVILFLMTMATAFMGYVF). Residues H51 and H65 each coordinate heme b.

It belongs to the cytochrome b family. In terms of assembly, the cytochrome bc1 complex contains 3 respiratory subunits (MT-CYB, CYC1 and UQCRFS1), 2 core proteins (UQCRC1 and UQCRC2) and probably 6 low-molecular weight proteins. Heme b is required as a cofactor.

The protein resides in the mitochondrion inner membrane. Its function is as follows. Component of the ubiquinol-cytochrome c reductase complex (complex III or cytochrome b-c1 complex) that is part of the mitochondrial respiratory chain. The b-c1 complex mediates electron transfer from ubiquinol to cytochrome c. Contributes to the generation of a proton gradient across the mitochondrial membrane that is then used for ATP synthesis. This is Cytochrome b (mt-cyb) from Plethodon yonahlossee (Yonahlossee salamander).